Reading from the N-terminus, the 251-residue chain is Chromobox protein homolog 7 (251 aa).

Residues F11–Y69 form the Chromo domain. The disordered stretch occupies residues E190 to V220. A required for cellular lifespan extension region spans residues T223–E236.

In terms of assembly, component of a PRC1-like complex. Interacts with RING1 and RNF2/RING1B, but not with BMI1, EED or EZH2. Interacts with PCGF1, PCGF2, PCGF3, PCGF5 and PCGF6.

It localises to the nucleus. Functionally, component of a Polycomb group (PcG) multiprotein PRC1-like complex, a complex class required to maintain the transcriptionally repressive state of many genes, including Hox genes, throughout development. PcG PRC1 complex acts via chromatin remodeling and modification of histones; it mediates monoubiquitination of histone H2A 'Lys-119', rendering chromatin heritably changed in its expressibility. Promotes histone H3 trimethylation at 'Lys-9' (H3K9me3). Binds to trimethylated lysine residues in histones, and possibly also other proteins. Regulator of cellular lifespan by maintaining the repression of CDKN2A, but not by inducing telomerase activity. The protein is Chromobox protein homolog 7 (CBX7) of Homo sapiens (Human).